Consider the following 248-residue polypeptide: Probable transcriptional regulatory protein Ccel_0181 (248 aa).

It belongs to the TACO1 family.

It is found in the cytoplasm. This is Probable transcriptional regulatory protein Ccel_0181 from Ruminiclostridium cellulolyticum (strain ATCC 35319 / DSM 5812 / JCM 6584 / H10) (Clostridium cellulolyticum).